The primary structure comprises 232 residues: Orotate phosphoribosyltransferase (232 aa).

Lys-28 serves as a coordination point for 5-phospho-alpha-D-ribose 1-diphosphate. 36–37 (FF) lines the orotate pocket. 5-phospho-alpha-D-ribose 1-diphosphate-binding positions include 78–79 (YK), Arg-108, Lys-109, Lys-112, His-114, and 134–142 (DDVITAGTA). Residues Thr-138 and Arg-166 each coordinate orotate.

The protein belongs to the purine/pyrimidine phosphoribosyltransferase family. PyrE subfamily. As to quaternary structure, homodimer.

The catalysed reaction is orotidine 5'-phosphate + diphosphate = orotate + 5-phospho-alpha-D-ribose 1-diphosphate. The protein operates within pyrimidine metabolism; UMP biosynthesis via de novo pathway; UMP from orotate: step 1/2. In terms of biological role, catalyzes the transfer of a ribosyl phosphate group from 5-phosphoribose 1-diphosphate to orotate, leading to the formation of orotidine monophosphate (OMP). This is Orotate phosphoribosyltransferase (URA5) from Sordaria macrospora.